Consider the following 141-residue polypeptide: Nucleoside diphosphate kinase (141 aa).

Residues Lys11, Phe59, Arg87, Thr93, Arg104, and Asn114 each coordinate ATP. His117 (pros-phosphohistidine intermediate) is an active-site residue.

This sequence belongs to the NDK family. As to quaternary structure, homotetramer. Requires Mg(2+) as cofactor.

The protein resides in the cytoplasm. The catalysed reaction is a 2'-deoxyribonucleoside 5'-diphosphate + ATP = a 2'-deoxyribonucleoside 5'-triphosphate + ADP. It catalyses the reaction a ribonucleoside 5'-diphosphate + ATP = a ribonucleoside 5'-triphosphate + ADP. Major role in the synthesis of nucleoside triphosphates other than ATP. The ATP gamma phosphate is transferred to the NDP beta phosphate via a ping-pong mechanism, using a phosphorylated active-site intermediate. This is Nucleoside diphosphate kinase from Vibrio parahaemolyticus serotype O3:K6 (strain RIMD 2210633).